Reading from the N-terminus, the 86-residue chain is Small ribosomal subunit protein bS16 (86 aa).

The protein belongs to the bacterial ribosomal protein bS16 family.

This chain is Small ribosomal subunit protein bS16, found in Thermoanaerobacter pseudethanolicus (strain ATCC 33223 / 39E) (Clostridium thermohydrosulfuricum).